Here is a 132-residue protein sequence, read N- to C-terminus: D-ribose pyranase (132 aa).

H20 functions as the Proton donor in the catalytic mechanism. Substrate-binding positions include D28, H99, and 121–123 (YSN).

The protein belongs to the RbsD / FucU family. RbsD subfamily. Homodecamer.

The protein localises to the cytoplasm. It catalyses the reaction beta-D-ribopyranose = beta-D-ribofuranose. It functions in the pathway carbohydrate metabolism; D-ribose degradation; D-ribose 5-phosphate from beta-D-ribopyranose: step 1/2. Its function is as follows. Catalyzes the interconversion of beta-pyran and beta-furan forms of D-ribose. The sequence is that of D-ribose pyranase from Lactococcus lactis subsp. cremoris (strain SK11).